Reading from the N-terminus, the 217-residue chain is Putative 3-methyladenine DNA glycosylase (217 aa).

In terms of domain architecture, RPE2 insert spans 105 to 145 (SHNNVYTIDTAKIKSQITDEKTQSIIIRKNRRIMKFYIPNL).

This sequence belongs to the DNA glycosylase MPG family.

The protein is Putative 3-methyladenine DNA glycosylase of Rickettsia prowazekii (strain Madrid E).